The chain runs to 189 residues: Ion-translocating oxidoreductase complex subunit B (189 aa).

The hydrophobic stretch occupies residues 1 to 26; that stretch reads MSAIVIAIVVLTILALVFGVLLGFAA. Residues 32-90 form the 4Fe-4S domain; that stretch reads EGNPLTDQIEALLPQTQCGQCGYPGCRPYAEAIANGDKVNKCPPGGAATMEKLADLMGV. [4Fe-4S] cluster is bound by residues C49, C52, C57, C73, C114, C117, C120, C124, C144, C147, C150, and C154. 4Fe-4S ferredoxin-type domains follow at residues 105 to 134 and 135 to 164; these read KVAY…GSGK and LMHT…MLPV.

The protein belongs to the 4Fe4S bacterial-type ferredoxin family. RnfB subfamily. As to quaternary structure, the complex is composed of six subunits: RnfA, RnfB, RnfC, RnfD, RnfE and RnfG. Requires [4Fe-4S] cluster as cofactor.

Its subcellular location is the cell inner membrane. Functionally, part of a membrane-bound complex that couples electron transfer with translocation of ions across the membrane. In Shewanella pealeana (strain ATCC 700345 / ANG-SQ1), this protein is Ion-translocating oxidoreductase complex subunit B.